We begin with the raw amino-acid sequence, 335 residues long: Beta-hexosaminidase (335 aa).

Substrate contacts are provided by residues aspartate 60, arginine 68, arginine 133, and lysine 163–histidine 164. The active-site Proton donor/acceptor is the histidine 176. The active-site Nucleophile is aspartate 247.

This sequence belongs to the glycosyl hydrolase 3 family. NagZ subfamily.

The protein resides in the cytoplasm. It carries out the reaction Hydrolysis of terminal non-reducing N-acetyl-D-hexosamine residues in N-acetyl-beta-D-hexosaminides.. The protein operates within cell wall biogenesis; peptidoglycan recycling. Plays a role in peptidoglycan recycling by cleaving the terminal beta-1,4-linked N-acetylglucosamine (GlcNAc) from peptide-linked peptidoglycan fragments, giving rise to free GlcNAc, anhydro-N-acetylmuramic acid and anhydro-N-acetylmuramic acid-linked peptides. The polypeptide is Beta-hexosaminidase (Stenotrophomonas maltophilia (strain R551-3)).